Here is a 288-residue protein sequence, read N- to C-terminus: UDP-3-O-acyl-N-acetylglucosamine deacetylase (288 aa).

Histidine 79, histidine 236, and aspartate 240 together coordinate Zn(2+). The active-site Proton donor is the histidine 263.

Belongs to the LpxC family. Requires Zn(2+) as cofactor.

It catalyses the reaction a UDP-3-O-[(3R)-3-hydroxyacyl]-N-acetyl-alpha-D-glucosamine + H2O = a UDP-3-O-[(3R)-3-hydroxyacyl]-alpha-D-glucosamine + acetate. The protein operates within glycolipid biosynthesis; lipid IV(A) biosynthesis; lipid IV(A) from (3R)-3-hydroxytetradecanoyl-[acyl-carrier-protein] and UDP-N-acetyl-alpha-D-glucosamine: step 2/6. Functionally, catalyzes the hydrolysis of UDP-3-O-myristoyl-N-acetylglucosamine to form UDP-3-O-myristoylglucosamine and acetate, the committed step in lipid A biosynthesis. The polypeptide is UDP-3-O-acyl-N-acetylglucosamine deacetylase (Rickettsia felis (strain ATCC VR-1525 / URRWXCal2) (Rickettsia azadi)).